The sequence spans 151 residues: Large ribosomal subunit protein uL13 (151 aa).

The protein belongs to the universal ribosomal protein uL13 family. In terms of assembly, part of the 50S ribosomal subunit.

Its function is as follows. This protein is one of the early assembly proteins of the 50S ribosomal subunit, although it is not seen to bind rRNA by itself. It is important during the early stages of 50S assembly. The protein is Large ribosomal subunit protein uL13 of Rippkaea orientalis (strain PCC 8801 / RF-1) (Cyanothece sp. (strain PCC 8801)).